A 341-amino-acid polypeptide reads, in one-letter code: DNA-directed RNA polymerase subunit alpha (341 aa).

The alpha N-terminal domain (alpha-NTD) stretch occupies residues 1–233 (MIRDEIPISA…NLFIPFLHAE (233 aa)). The tract at residues 265 to 341 (TKGVTFKHIF…NLPKNKLHFH (77 aa)) is alpha C-terminal domain (alpha-CTD).

It belongs to the RNA polymerase alpha chain family. In plastids the minimal PEP RNA polymerase catalytic core is composed of four subunits: alpha, beta, beta', and beta''. When a (nuclear-encoded) sigma factor is associated with the core the holoenzyme is formed, which can initiate transcription.

It is found in the plastid. The protein localises to the chloroplast. The catalysed reaction is RNA(n) + a ribonucleoside 5'-triphosphate = RNA(n+1) + diphosphate. Its function is as follows. DNA-dependent RNA polymerase catalyzes the transcription of DNA into RNA using the four ribonucleoside triphosphates as substrates. In Takakia lepidozioides (Moss), this protein is DNA-directed RNA polymerase subunit alpha.